The following is a 142-amino-acid chain: Hemoglobin subunit alpha-A (142 aa).

Positions 2-142 (VLSAADKTNV…VGTVLTAKYR (141 aa)) constitute a Globin domain. Histidine 59 lines the O2 pocket. Residue histidine 88 participates in heme b binding.

The protein belongs to the globin family. In terms of assembly, heterotetramer of two alpha chains and two beta chains. Red blood cells.

Involved in oxygen transport from the lung to the various peripheral tissues. The chain is Hemoglobin subunit alpha-A (HBAA) from Anser anser anser (Western greylag goose).